Here is a 315-residue protein sequence, read N- to C-terminus: Lipoyl synthase (315 aa).

The tract at residues 1-33 (MADMPPVLRHPEKAHRPDQPQPKKPDWIRVKAP) is disordered. Residues 9–29 (RHPEKAHRPDQPQPKKPDWIR) show a composition bias toward basic and acidic residues. The [4Fe-4S] cluster site is built by cysteine 54, cysteine 59, cysteine 65, cysteine 80, cysteine 84, cysteine 87, and serine 294. In terms of domain architecture, Radical SAM core spans 66 to 283 (WSQGHATMMI…EKAAYGKGFL (218 aa)).

This sequence belongs to the radical SAM superfamily. Lipoyl synthase family. [4Fe-4S] cluster serves as cofactor.

The protein localises to the cytoplasm. The enzyme catalyses [[Fe-S] cluster scaffold protein carrying a second [4Fe-4S](2+) cluster] + N(6)-octanoyl-L-lysyl-[protein] + 2 oxidized [2Fe-2S]-[ferredoxin] + 2 S-adenosyl-L-methionine + 4 H(+) = [[Fe-S] cluster scaffold protein] + N(6)-[(R)-dihydrolipoyl]-L-lysyl-[protein] + 4 Fe(3+) + 2 hydrogen sulfide + 2 5'-deoxyadenosine + 2 L-methionine + 2 reduced [2Fe-2S]-[ferredoxin]. The protein operates within protein modification; protein lipoylation via endogenous pathway; protein N(6)-(lipoyl)lysine from octanoyl-[acyl-carrier-protein]: step 2/2. Its function is as follows. Catalyzes the radical-mediated insertion of two sulfur atoms into the C-6 and C-8 positions of the octanoyl moiety bound to the lipoyl domains of lipoate-dependent enzymes, thereby converting the octanoylated domains into lipoylated derivatives. The polypeptide is Lipoyl synthase (Paracoccus denitrificans (strain Pd 1222)).